The chain runs to 495 residues: Probable cytosol aminopeptidase (495 aa).

Mn(2+) is bound by residues Lys-258 and Asp-263. Residue Lys-270 is part of the active site. Residues Asp-281, Asp-340, and Glu-342 each coordinate Mn(2+). Arg-344 is a catalytic residue.

The protein belongs to the peptidase M17 family. It depends on Mn(2+) as a cofactor.

The protein localises to the cytoplasm. The catalysed reaction is Release of an N-terminal amino acid, Xaa-|-Yaa-, in which Xaa is preferably Leu, but may be other amino acids including Pro although not Arg or Lys, and Yaa may be Pro. Amino acid amides and methyl esters are also readily hydrolyzed, but rates on arylamides are exceedingly low.. It catalyses the reaction Release of an N-terminal amino acid, preferentially leucine, but not glutamic or aspartic acids.. Presumably involved in the processing and regular turnover of intracellular proteins. Catalyzes the removal of unsubstituted N-terminal amino acids from various peptides. This Leptospira interrogans serogroup Icterohaemorrhagiae serovar Lai (strain 56601) protein is Probable cytosol aminopeptidase.